Here is a 232-residue protein sequence, read N- to C-terminus: Large ribosomal subunit protein uL1 (232 aa).

This sequence belongs to the universal ribosomal protein uL1 family. In terms of assembly, part of the 50S ribosomal subunit.

In terms of biological role, binds directly to 23S rRNA. The L1 stalk is quite mobile in the ribosome, and is involved in E site tRNA release. Protein L1 is also a translational repressor protein, it controls the translation of the L11 operon by binding to its mRNA. The chain is Large ribosomal subunit protein uL1 from Bacteroides fragilis (strain ATCC 25285 / DSM 2151 / CCUG 4856 / JCM 11019 / LMG 10263 / NCTC 9343 / Onslow / VPI 2553 / EN-2).